The sequence spans 340 residues: HPr kinase/phosphorylase (340 aa).

Residues His153 and Lys174 contribute to the active site. Residue 168 to 175 (GNSGLGKS) participates in ATP binding. Ser175 is a Mg(2+) binding site. Asp192 acts as the Proton acceptor; for phosphorylation activity. Proton donor; for dephosphorylation activity in catalysis. Positions 216–225 (MEIRGLGVVD) are important for the catalytic mechanism of both phosphorylation and dephosphorylation. Position 217 (Glu217) interacts with Mg(2+). Arg258 is an active-site residue. Residues 279-284 (PINPGK) are important for the catalytic mechanism of dephosphorylation.

The protein belongs to the HPrK/P family. In terms of assembly, homohexamer. Requires Mg(2+) as cofactor.

The enzyme catalyses [HPr protein]-L-serine + ATP = [HPr protein]-O-phospho-L-serine + ADP + H(+). It catalyses the reaction [HPr protein]-O-phospho-L-serine + phosphate + H(+) = [HPr protein]-L-serine + diphosphate. In terms of biological role, catalyzes the ATP- as well as the pyrophosphate-dependent phosphorylation of a specific serine residue in HPr, a phosphocarrier protein of the phosphoenolpyruvate-dependent sugar phosphotransferase system (PTS). HprK/P also catalyzes the pyrophosphate-producing, inorganic phosphate-dependent dephosphorylation (phosphorolysis) of seryl-phosphorylated HPr (P-Ser-HPr). This is HPr kinase/phosphorylase from Prosthecochloris aestuarii (strain DSM 271 / SK 413).